A 510-amino-acid chain; its full sequence is Ninja-family protein mc410 (510 aa).

Disordered regions lie at residues 1–179 (MDEN…RQIL), 323–414 (HPSH…PSEF), and 481–510 (RHAS…SAQS). 2 stretches are compositionally biased toward basic and acidic residues: residues 31 to 44 (SKVE…KVIN) and 103 to 146 (RPVE…DKTR). Positions 148–160 (SHISITTDEGSTA) are enriched in polar residues. Basic and acidic residues-rich tracts occupy residues 363–389 (RAME…EENV) and 397–406 (RAKDPPDQPR). Polar residues predominate over residues 485 to 496 (VEQTSQEPGTGV). The span at 497 to 510 (SSFPSSNPAASAQS) shows a compositional bias: low complexity.

Belongs to the Ninja family.

The protein localises to the nucleus. The protein is Ninja-family protein mc410 (MC410) of Nicotiana tabacum (Common tobacco).